The following is a 469-amino-acid chain: Actin-related protein 4 (469 aa).

Residues 104-136 are disordered; sequence PERSTPPSKKGINISDDGDVPMEDDGNNNEDAT. Residues 119-136 show a composition bias toward acidic residues; sequence DDGDVPMEDDGNNNEDAT.

Belongs to the actin family. ARP4 subfamily. In terms of assembly, component of the NuA4 histone acetyltransferase complex, of the INO80 chromatin remodeling complex, and of the SWR1 chromatin remodeling complex.

It is found in the nucleus. Chromatin interaction component of the NuA4 histone acetyltransferase complex which is involved in transcriptional activation of selected genes principally by acetylation of nucleosomal histone H4 and H2A. The NuA4 complex is also involved in DNA repair. Is required for NuA4 complex integrity. Component of the SWR1 complex which mediates the ATP-dependent exchange of histone H2A for the H2A variant H2A.Z leading to transcriptional regulation of selected genes by chromatin remodeling. Component of the INO80 complex which remodels chromatin by shifting nucleosomes and is involved in DNA repair. The sequence is that of Actin-related protein 4 (arp-4) from Neurospora crassa (strain ATCC 24698 / 74-OR23-1A / CBS 708.71 / DSM 1257 / FGSC 987).